The chain runs to 318 residues: NADH-ubiquinone oxidoreductase chain 1 (318 aa).

A run of 8 helical transmembrane segments spans residues 2–22 (FMVN…FLTL), 76–96 (TLAL…HPLI), 98–118 (FNLG…SILW), 140–160 (ISYE…SGSF), 171–191 (HSWL…STLA), 217–237 (AGSF…MNAL), 253–273 (ELYT…FLWI), and 294–314 (LPLT…TSGI).

The protein belongs to the complex I subunit 1 family. Core subunit of respiratory chain NADH dehydrogenase (Complex I) which is composed of 45 different subunits.

It is found in the mitochondrion inner membrane. It catalyses the reaction a ubiquinone + NADH + 5 H(+)(in) = a ubiquinol + NAD(+) + 4 H(+)(out). Its function is as follows. Core subunit of the mitochondrial membrane respiratory chain NADH dehydrogenase (Complex I) which catalyzes electron transfer from NADH through the respiratory chain, using ubiquinone as an electron acceptor. Essential for the catalytic activity and assembly of complex I. The sequence is that of NADH-ubiquinone oxidoreductase chain 1 (MT-ND1) from Ateles paniscus (Black spider monkey).